The sequence spans 615 residues: Mitochondrial distribution and morphology protein 34 (615 aa).

In terms of domain architecture, SMP-LTD spans Met-1–Leu-195. 3 disordered regions span residues Ser-293–Ser-313, Ala-346–Asp-566, and Pro-596–Arg-615. The span at Thr-301–Ser-313 shows a compositional bias: polar residues. Over residues Ala-346–Gly-355 the composition is skewed to low complexity. The span at Arg-356 to Arg-367 shows a compositional bias: basic residues. 3 stretches are compositionally biased toward polar residues: residues Ile-384–Pro-403, Asp-435–Ser-446, and Val-457–Arg-499. The span at Gln-517 to Gln-557 shows a compositional bias: low complexity. Basic and acidic residues predominate over residues Pro-596 to Asp-606.

It belongs to the MDM34 family. In terms of assembly, component of the ER-mitochondria encounter structure (ERMES) or MDM complex, composed of mmm-1, mdm10, mdm12 and mdm34.

The protein localises to the mitochondrion outer membrane. Component of the ERMES/MDM complex, which serves as a molecular tether to connect the endoplasmic reticulum (ER) and mitochondria. Components of this complex are involved in the control of mitochondrial shape and protein biogenesis, and function in nonvesicular lipid trafficking between the ER and mitochondria. Mdm34 is required for the interaction of the ER-resident membrane protein mmm-1 and the outer mitochondrial membrane-resident beta-barrel protein mdm10. The protein is Mitochondrial distribution and morphology protein 34 of Neurospora crassa (strain ATCC 24698 / 74-OR23-1A / CBS 708.71 / DSM 1257 / FGSC 987).